The sequence spans 275 residues: Protein rolling stone (275 aa).

6 helical membrane-spanning segments follow: residues 45–65, 72–92, 127–147, 162–182, 185–205, and 232–252; these read LLYR…CVIV, FFIY…LISA, WLYN…WVFL, IITH…IAFP, ILHM…TLIY, and MVTF…LFGL.

Expressed in cells of the somatic mesoderm, most notably the muscle founder cells, between embryonic stages 12 and 14, in growing muscle fibers in dorsal, lateral and ventral positions. At stage 16 strongest expression is in some ventral muscles and muscle 8. At stages 16/17 expression is restricted to some cells of the CNS, the brain and the gonads.

Its subcellular location is the membrane. Functionally, may have a central role in the fusion process during myogenesis, within the somatic mesoderm. The sequence is that of Protein rolling stone (rost) from Drosophila melanogaster (Fruit fly).